The sequence spans 390 residues: Guanine nucleotide-binding protein alpha-7 subunit (390 aa).

2 stretches are compositionally biased toward low complexity: residues 1 to 12 and 22 to 42; these read MSSTTTNTTTAT and SSSP…MSPS. The tract at residues 1–42 is disordered; the sequence is MSSTTTNTTTATPAIQVNGNQSSSPQSPSSSTSTLSPPMSPS. The G-alpha domain maps to 70-390; sequence SELKLLLLGT…TRQTMEEGGI (321 aa). The interval 73–86 is G1 motif; it reads KLLLLGTGDSGKST. GTP contacts are provided by residues 78–85, 213–219, 238–242, 307–310, and A363; these read GTGDSGKS, LYTRVAS, DVAGQ, and NKRD. A Mg(2+)-binding site is contributed by S85. Positions 211-219 are G2 motif; the sequence is DILYTRVAS. Residues 234 to 243 form a G3 motif region; that stretch reads FRMIDVAGQR. A G4 motif region spans residues 303-310; it reads ILFLNKRD. Residues 361 to 366 are G5 motif; it reads TTATDT.

The protein belongs to the G-alpha family. As to quaternary structure, g proteins are composed of 3 units; alpha, beta and gamma. The alpha chain contains the guanine nucleotide binding site.

In terms of biological role, guanine nucleotide-binding proteins (G proteins) are involved as modulators or transducers in various transmembrane signaling systems. This chain is Guanine nucleotide-binding protein alpha-7 subunit (gpaG), found in Dictyostelium discoideum (Social amoeba).